The primary structure comprises 365 residues: IgG receptor FcRn large subunit p51 (365 aa).

A signal peptide spans 1 to 21; sequence MGMPLPWALSLLLVLLPQTWG. The segment at 22–110 is alpha-1; sequence SETRPPLMYH…KTLEKILNGT (89 aa). At 22–297 the chain is on the extracellular side; that stretch reads SETRPPLMYH…VDLDSSARSS (276 aa). N-linked (GlcNAc...) asparagine glycans are attached at residues asparagine 108, asparagine 125, asparagine 149, and asparagine 246. The alpha-2 stretch occupies residues 111 to 200; it reads YTLQGLLGCE…ERGRRNLEWK (90 aa). 2 cysteine pairs are disulfide-bonded: cysteine 119–cysteine 182 and cysteine 221–cysteine 275. The segment at 201-290 is alpha-3; sequence EPPSMRLKAR…GLAQPLTVDL (90 aa). Residues 202–289 enclose the Ig-like C1-type domain; the sequence is PPSMRLKARP…EGLAQPLTVD (88 aa). The interval 291–297 is connecting peptide; the sequence is DSSARSS. A helical membrane pass occupies residues 298-321; the sequence is VPVVGIVLGLLLVVVAIAGGVLLW. Residues 322–365 lie on the Cytoplasmic side of the membrane; sequence GRMRSGLPAPWLSLSGDDSGDLLPGGNLPPEAEPQGANAFPATS. Serine 334 carries the post-translational modification Phosphoserine. The disordered stretch occupies residues 343-365; it reads LLPGGNLPPEAEPQGANAFPATS.

Belongs to the immunoglobulin superfamily. FcRn complex consists of two subunits: p51, and p14 which is equivalent to beta-2-microglobulin. It forms an MHC class I-like heterodimer. Interacts with albumin/ALB; this interaction regulates ALB homeostasis. Intestinal epithelium of suckling rodents. Expressed in neonatal intestine and fetal yolk sac.

It is found in the cell membrane. Its subcellular location is the endosome membrane. Functionally, cell surface receptor that transfers passive humoral immunity from the mother to the newborn. Binds to the Fc region of monomeric immunoglobulin gamma and mediates its selective uptake from milk. IgG in the milk is bound at the apical surface of the intestinal epithelium. The resultant FcRn-IgG complexes are transcytosed across the intestinal epithelium and IgG is released from FcRn into blood or tissue fluids. Throughout life, contributes to effective humoral immunity by recycling IgG and extending its half-life in the circulation. Mechanistically, monomeric IgG binding to FcRn in acidic endosomes of endothelial and hematopoietic cells recycles IgG to the cell surface where it is released into the circulation. In addition of IgG, regulates homeostasis of the other most abundant circulating protein albumin/ALB. This Mus musculus (Mouse) protein is IgG receptor FcRn large subunit p51 (Fcgrt).